Here is a 102-residue protein sequence, read N- to C-terminus: Small ribosomal subunit protein uS10 (102 aa).

It belongs to the universal ribosomal protein uS10 family. As to quaternary structure, part of the 30S ribosomal subunit.

Functionally, involved in the binding of tRNA to the ribosomes. In Streptococcus thermophilus (strain ATCC BAA-491 / LMD-9), this protein is Small ribosomal subunit protein uS10.